The chain runs to 403 residues: Blue light- and temperature-regulated antirepressor BluF (403 aa).

Positions 2-93 (LTTLIYRSHI…ARRFGKAGME (92 aa)) constitute a BLUF domain. Positions 98–144 (RLHERDDVLQAVFDKGTSKFQLTYDDRALQFFRTFVLATEQSTYFEI) are joining helix. In terms of domain architecture, EAL spans 155–403 (DGSDKELDSC…IPSIAWPEKK (249 aa)).

Monomer, it undergoes transient dimerization following photoexcitation or upon temperature reduction, with a relaxation time of about 2 minutes. The dimer may be the inactive state. Interacts with the N- and C-terminal domains of BluR. Can also interact with the C-terminal domain of MlrA. Requires FAD as cofactor.

Binds to and releases the BluR repressor from its bound DNA target in a blue light-dependent (470 nm) fashion. A shift to low temperature also triggers a BluF-mediated relief of repression by BluR, suggesting BluF may serve as a thermometer. Blue light may act to increase the affinity of BluF for BluR, allowing it to be released from its operator. The protein has a reversible photocycle, and undergoes structural changes, probably in the EAL domain, in response to light. This Escherichia coli (strain K12) protein is Blue light- and temperature-regulated antirepressor BluF.